The chain runs to 74 residues: Defensin J1-2 (74 aa).

The first 27 residues, 1 to 27 (MAGFSKVIATIFLMMMLVFATGMVAEA), serve as a signal peptide directing secretion. Disulfide bonds link Cys-30-Cys-74, Cys-41-Cys-61, Cys-47-Cys-68, and Cys-51-Cys-70.

This sequence belongs to the DEFL family. As to quaternary structure, monomer. In terms of tissue distribution, expressed in flowers and in young fruits.

Its subcellular location is the secreted. Its function is as follows. Plant defense peptide with antifungal activity against F.oxysporum and B.cinerea. The chain is Defensin J1-2 from Capsicum annuum (Capsicum pepper).